Reading from the N-terminus, the 443-residue chain is MEIASNKGVIADASTPAGRAGMSESEWREAIKFDSTDTGWVIMSIGMAIGAGIVFLPVQVGLMGLWVFLLSSVIGYPAMYLFQRLFINTLAESPECKDYPSVISGYLGKNWGILLGALYFVMLVIWMFVYSTAITNDSASYLHTFGVTEGLLSDSPFYGLVLICILVAISSRGEKLLFKISTGMVLTKLLVVAALGVSMVGMWHLYNVGSLPPLGLLVKNAIITLPFTLTSILFIQTLSPMVISYRSREKSIEVARHKALRAMNIAFGILFIIVFFYAVSFTLAMGHDEAVKAYEQNISALAIAAQFISGDGAAWVKVVSVILNIFAVMTAFFGVYLGFREATQGIVMNILRRKMPAEKINENLVQRGIMIFAILLAWSAIVLNAPVLSFTSICSPIFGLVGCLIPAWLVYKVPALHKYKGMSLYLIIVTGLLLCVSPFLAFS.

Helical transmembrane passes span 38 to 60 (TGWV…PVQV), 65 to 87 (LWVF…RLFI), 111 to 131 (WGIL…FVYS), 150 to 170 (GLLS…VAIS), 183 to 203 (GMVL…VGMW), 215 to 235 (GLLV…ILFI), 265 to 285 (IAFG…TLAM), 319 to 339 (VSVI…YLGF), 368 to 388 (GIMI…APVL), 390 to 410 (FTSI…AWLV), and 422 to 442 (MSLY…FLAF).

It belongs to the amino acid/polyamine transporter 2 family. SdaC/TdcC subfamily.

It is found in the cell inner membrane. Functionally, transports both D- and L-serine; allows growth of strain CFT073 cells normally unable to transport D-serine on that substrate. Transport relies on the H(+) gradient and is not competed by L-threonine. May play a role in L-cysteine detoxification. This is Serine transporter from Escherichia coli O157:H7.